Here is a 317-residue protein sequence, read N- to C-terminus: 4-hydroxy-3-methylbut-2-enyl diphosphate reductase (317 aa).

A [4Fe-4S] cluster-binding site is contributed by Cys-12. Residues His-41 and His-74 each coordinate (2E)-4-hydroxy-3-methylbut-2-enyl diphosphate. Dimethylallyl diphosphate is bound by residues His-41 and His-74. 2 residues coordinate isopentenyl diphosphate: His-41 and His-74. Cys-97 contributes to the [4Fe-4S] cluster binding site. His-125 is a binding site for (2E)-4-hydroxy-3-methylbut-2-enyl diphosphate. His-125 lines the dimethylallyl diphosphate pocket. Isopentenyl diphosphate is bound at residue His-125. Glu-127 acts as the Proton donor in catalysis. Thr-168 lines the (2E)-4-hydroxy-3-methylbut-2-enyl diphosphate pocket. A [4Fe-4S] cluster-binding site is contributed by Cys-198. (2E)-4-hydroxy-3-methylbut-2-enyl diphosphate-binding residues include Ser-226, Ser-227, Asn-228, and Ser-270. Dimethylallyl diphosphate is bound by residues Ser-226, Ser-227, Asn-228, and Ser-270. Residues Ser-226, Ser-227, Asn-228, and Ser-270 each coordinate isopentenyl diphosphate.

It belongs to the IspH family. As to quaternary structure, homodimer. The cofactor is [4Fe-4S] cluster.

The enzyme catalyses isopentenyl diphosphate + 2 oxidized [2Fe-2S]-[ferredoxin] + H2O = (2E)-4-hydroxy-3-methylbut-2-enyl diphosphate + 2 reduced [2Fe-2S]-[ferredoxin] + 2 H(+). It carries out the reaction dimethylallyl diphosphate + 2 oxidized [2Fe-2S]-[ferredoxin] + H2O = (2E)-4-hydroxy-3-methylbut-2-enyl diphosphate + 2 reduced [2Fe-2S]-[ferredoxin] + 2 H(+). It functions in the pathway isoprenoid biosynthesis; dimethylallyl diphosphate biosynthesis; dimethylallyl diphosphate from (2E)-4-hydroxy-3-methylbutenyl diphosphate: step 1/1. Its pathway is isoprenoid biosynthesis; isopentenyl diphosphate biosynthesis via DXP pathway; isopentenyl diphosphate from 1-deoxy-D-xylulose 5-phosphate: step 6/6. Functionally, catalyzes the conversion of 1-hydroxy-2-methyl-2-(E)-butenyl 4-diphosphate (HMBPP) into a mixture of isopentenyl diphosphate (IPP) and dimethylallyl diphosphate (DMAPP). Acts in the terminal step of the DOXP/MEP pathway for isoprenoid precursor biosynthesis. This chain is 4-hydroxy-3-methylbut-2-enyl diphosphate reductase, found in Yersinia enterocolitica serotype O:8 / biotype 1B (strain NCTC 13174 / 8081).